The following is a 353-amino-acid chain: Glutamine synthetase nodule isozyme (353 aa).

In terms of domain architecture, GS beta-grasp spans 19–99 (IIAEYIWVGG…VMCDTYTPAG (81 aa)). The GS catalytic domain occupies 106-353 (KRHAAAKIFS…TSMIAETTLL (248 aa)).

Belongs to the glutamine synthetase family. In terms of assembly, homooctamer.

The protein localises to the cytoplasm. It carries out the reaction L-glutamate + NH4(+) + ATP = L-glutamine + ADP + phosphate + H(+). In Lupinus luteus (European yellow lupine), this protein is Glutamine synthetase nodule isozyme.